A 687-amino-acid chain; its full sequence is Adhesion G-protein coupled receptor G1 (687 aa).

Residues 1–25 form the signal peptide; the sequence is MTAQSLLQTTLFLLSLLFLVQGAHG. 26–33 serves as a coordination point for heparin; sequence RGHREDFR. The Extracellular segment spans residues 26–402; the sequence is RGHREDFRFC…VEVDAVHKHY (377 aa). 2 disulfides stabilise this stretch: Cys35/Cys91 and Cys121/Cys177. Residues Asn39, Asn148, and Asn171 are each glycosylated (N-linked (GlcNAc...) asparagine). 190–200 is a binding site for heparin; the sequence is LKHPQKASRRP. Positions 224–395 constitute a GAIN-B domain; it reads DTVSFEEDRI…AVLMVSSVEV (172 aa). Asn234, Asn303, Asn324, and Asn341 each carry an N-linked (GlcNAc...) asparagine glycan. Cystine bridges form between Cys346-Cys377 and Cys366-Cys379. The GPS stretch occupies residues 346-395; it reads CVFWVEDPTLSSPGHWSSAGCETVRRETQTSCFCNHLTYFAVLMVSSVEV. Positions 384-397 are stachel; the sequence is YFAVLMVSSVEVDA. The chain crosses the membrane as a helical span at residues 403–423; the sequence is LSLLSYVGCVVSALACIVTIA. The Cytoplasmic segment spans residues 424-442; the sequence is AYLCSRRKPRDYTIKVHMN. The chain crosses the membrane as a helical span at residues 443–463; sequence LLLAVFLLDTSFLLSEPVALT. Over 464–470 the chain is Extracellular; that stretch reads GSEAGCR. The chain crosses the membrane as a helical span at residues 471 to 491; the sequence is ASAIFLHFSLLACLSWMGLEG. At 492–512 the chain is on the cytoplasmic side; it reads YNLYRLVVEVFGTYVPGYLLK. Residues 513-533 form a helical membrane-spanning segment; that stretch reads LSAMGWGFPIFLVTLVALVDV. The Extracellular segment spans residues 534 to 570; it reads DNYGPIILAVHRTPEGVIYPSMCWIRDSLVSYITNLG. Residues 571–591 form a helical membrane-spanning segment; sequence LFSLVFLFNMAMLATMVVQIL. Residues 592-603 lie on the Cytoplasmic side of the membrane; that stretch reads RLRPHTQKWSHV. Residues 604–624 form a helical membrane-spanning segment; sequence LTLLGLSLVLGLPWALIFFSF. Topologically, residues 625 to 630 are extracellular; sequence ASGTFQ. A helical transmembrane segment spans residues 631 to 651; it reads LVVLYLFSIITSFQGFLIFIW. The Cytoplasmic segment spans residues 652-687; that stretch reads YWSMRLQARGGPSPLKSNSDSARLPISSGSTSSSRI. The disordered stretch occupies residues 664 to 687; sequence SPLKSNSDSARLPISSGSTSSSRI. Over residues 678–687 the composition is skewed to low complexity; the sequence is SSGSTSSSRI.

This sequence belongs to the G-protein coupled receptor 2 family. LN-TM7 subfamily. In terms of assembly, heterodimer of 2 chains generated by proteolytic processing; the large extracellular N-terminal fragment (ADGRG1 NT) and the membrane-bound C-terminal fragment (ADGRG1-CT) predominantly remain associated and non-covalently linked. ADGRG1 NT self-associates in a trans-trans manner; the homophilic interaction enhances receptor signaling. Interacts with TGM2. Interacts with heparin; leading to the reduction of ADGRG1 shedding. Interacts with COL3A1. Part of a GPCR-tetraspanin complex at least consisting of ADGRG1, CD81, eventually CD9, and GNA11 in which CD81 is enhancing the association of ADGRG1 with GNA11. In terms of processing, autoproteolytically cleaved into 2 fragments; the large extracellular N-terminal fragment (ADGRG1 NT) and the membrane-bound C-terminal fragment (ADGRG1 CT) predominantly remain associated and non-covalently linked. Shedding to yield the secreted ADGRG1 N-terminal fragment seems to involve metalloprotease(s). Post-translationally, ubiquitinated. Undergoes polyubiquitination upon activation.

The protein localises to the cell membrane. Its subcellular location is the secreted. It localises to the membrane raft. Its activity is regulated as follows. Forms a heterodimer of 2 chains generated by proteolytic processing that remain associated through non-covalent interactions mediated by the GAIN-B domain. In the inactivated receptor, the Stachel sequence (also named stalk) is embedded in the GAIN-B domain, where it adopts a beta-strand conformation. On activation, the Stachel moves into the 7 transmembrane region and adopts a twisted hook-shaped configuration that forms contacts within the receptor, leading to coupling of a G-alpha protein, which activates signaling. The cleaved GAIN-B and N-terminal domains can then dissociate from the rest of the receptor. In terms of biological role, adhesion G-protein coupled receptor (aGPCR) for steroid hormone 17alpha-hydroxypregnenolone (17-OH), which is involved in cell adhesion and cell-cell interactions. Ligand binding causes a conformation change that triggers signaling via guanine nucleotide-binding proteins (G proteins) and modulates the activity of downstream effectors, such as RhoA pathway. ADGRG1 is coupled to G(12) and/or G(13) G proteins (GNA12 and GNA13, respectively) and mediates the activation Rho small GTPases. Acts as a potent suppressor of ferroptosis: binding to 17-OH-binding initiates signaling that down-regulates CD36 and alleviates ferroptosis-induced liver injury. Ligand-binding also induces cell adhesion activity via association with proteins such as collagen III/COL3A1 and TGM2. Mediates cell matrix adhesion in developing neurons and hematopoietic stem cells. Involved in cortical development, specifically in maintenance of the pial basement membrane integrity and in cortical lamination: association with COL3A1 in the developing brain inhibits neuronal migration via activation of the RhoA pathway. Together with TGM2, acts as a regulator of myelination and myelin repair in oligodendrocyte precursor cells. Acts as a hemostatic sensor of shear force: G protein-coupled receptor signaling is activated in response to shear force in platelets, promoting G(13) G protein signaling, and platelet shape change and aggregation in a COL3A1-dependent manner. Acts as an inhibitor of VEGFA production thereby inhibiting angiogenesis through a signaling pathway mediated by PRKCA. Plays a role in the maintenance of hematopoietic stem cells in bone marrow niche. Plays an essential role in testis development. The polypeptide is Adhesion G-protein coupled receptor G1 (ADGRG1) (Gorilla gorilla gorilla (Western lowland gorilla)).